Consider the following 1350-residue polypeptide: Nidogen (1350 aa).

The signal sequence occupies residues 1 to 22 (MPTFGSKLLACLLLSSVILVSG). The region spanning 107–260 (AFYSNVDTSF…GVWLFEVAPI (154 aa)) is the NIDO domain. Residue N231 is glycosylated (N-linked (GlcNAc...) asparagine). One can recognise an EGF-like 1 domain in the interval 281-321 (LALSCQAHAHQCHEKAECHDKAEGYCCVCGSGFYGNGKSCL). 3 disulfides stabilise this stretch: C285-C298, C292-C307, and C309-C320. Residues 325 to 550 (QPIRVTGTLT…GVTPESNACN (226 aa)) enclose the Nidogen G2 beta-barrel domain. N423 and N480 each carry an N-linked (GlcNAc...) asparagine glycan. The region spanning 545-583 (ESNACNDGTADCVENSVCVPYEDTYRCDCYHGFAAQLDE) is the EGF-like 2 domain. Disulfide bonds link C549/C562, C556/C571, C595/C608, C602/C617, and C619/C630. An EGF-like 3; calcium-binding domain is found at 591–631 (DIDECATGSHVCDENAVCDNTEGGFNCYCTEGFEGNGYRCL). N-linked (GlcNAc...) asparagine glycosylation occurs at N633. The disordered stretch occupies residues 645–691 (VEGQAEPTSEPSPNPSPYPDQGQDQEREREDDQYPQPNPYPYPEEQI). 5 consecutive EGF-like domains span residues 788-829 (DLIP…YNCD), 832-874 (SDDS…FNCQ), 912-953 (PAGR…TGCT), 955-996 (KPLS…YVCI), and 997-1037 (EEQN…SLCQ). Cystine bridges form between C792/C804, C798/C815, C817/C828, C836/C849, C843/C860, C862/C873, C916/C927, C921/C938, C940/C952, C959/C971, C965/C982, C984/C995, C1001/C1014, C1008/C1023, and C1025/C1036. N-linked (GlcNAc...) asparagine glycosylation is present at N801. An N-linked (GlcNAc...) asparagine glycan is attached at N1032. 4 LDL-receptor class B repeats span residues 1084-1126 (GRVY…DVIS), 1127-1170 (RRLY…DPYR), 1171-1216 (EKLF…LENS), and 1257-1282 (DQFY…QTPI).

Expressed in the basement membrane around the follicular epithelium of the adult ovary (at protein level).

It is found in the secreted. The protein localises to the extracellular space. The protein resides in the extracellular matrix. It localises to the basement membrane. Cell adhesion glycoprotein which is widely distributed in basement membranes. Involved in cell-extracellular matrix (ECM) interactions probably by connecting the laminin and collagen IV networks. Required for permeability and mechanical stability of basement membranes, and ECM dependent neural plasticity. Not involved in assembly of the embryonic basement membrane. This is Nidogen from Drosophila melanogaster (Fruit fly).